The sequence spans 252 residues: Imidazole glycerol phosphate synthase subunit HisF (252 aa).

Catalysis depends on residues Asp11 and Asp130.

The protein belongs to the HisA/HisF family. Heterodimer of HisH and HisF.

The protein localises to the cytoplasm. The catalysed reaction is 5-[(5-phospho-1-deoxy-D-ribulos-1-ylimino)methylamino]-1-(5-phospho-beta-D-ribosyl)imidazole-4-carboxamide + L-glutamine = D-erythro-1-(imidazol-4-yl)glycerol 3-phosphate + 5-amino-1-(5-phospho-beta-D-ribosyl)imidazole-4-carboxamide + L-glutamate + H(+). The protein operates within amino-acid biosynthesis; L-histidine biosynthesis; L-histidine from 5-phospho-alpha-D-ribose 1-diphosphate: step 5/9. Functionally, IGPS catalyzes the conversion of PRFAR and glutamine to IGP, AICAR and glutamate. The HisF subunit catalyzes the cyclization activity that produces IGP and AICAR from PRFAR using the ammonia provided by the HisH subunit. In Streptococcus gordonii (strain Challis / ATCC 35105 / BCRC 15272 / CH1 / DL1 / V288), this protein is Imidazole glycerol phosphate synthase subunit HisF.